The following is a 170-amino-acid chain: Cathelicidin antimicrobial peptide (170 aa).

The N-terminal stretch at 1-30 is a signal peptide; the sequence is MNTQWDSPSLGRWSLVLLLLGLVMPLAIVA. Residues 31–131 constitute a propeptide, cathelin-like domain (CLD); the sequence is QVLSYQEAVL…DISCDKDKRK (101 aa). Intrachain disulfides connect C86/C97 and C108/C125. An active core region spans residues 150–162; it reads LKNIGQRIKDFFG.

The protein belongs to the cathelicidin family. In terms of assembly, monomer, homodimer or homotrimer (in vitro). Oligomerizes as tetra- or hexamer in solution (in vitro). Proteolytically cleaved by proteinase PRTN3 into antibacterial peptide LL-37. Proteolytically cleaved by cathepsin CTSG and neutrophil elastase ELANE. Post-translationally, resistant to proteolytic degradation in solution, and when bound to both zwitterionic (mimicking mammalian membranes) and negatively charged membranes (mimicking bacterial membranes). In terms of processing, after secretion onto the skin surface, the CAMP gene product is processed by a serine protease-dependent mechanism into multiple novel antimicrobial peptides distinct from and shorter than cathelicidin LL-37. These peptides show enhanced antimicrobial action, acquiring the ability to kill skin pathogens such as S.aureus, E.coli and C.albicans. These peptides have lost the ability to stimulate CXCL8/IL8 release from keratinocytes. The peptides act synergistically, killing bacteria at lower concentrations when present together, and maintain activity at increased salt condition.

It localises to the secreted. Its subcellular location is the vesicle. In terms of biological role, antimicrobial protein that is an integral component of the innate immune system. Binds to bacterial lipopolysaccharides (LPS). Acts via neutrophil N-formyl peptide receptors to enhance the release of CXCL2. Postsecretory processing generates multiple cathelicidin antimicrobial peptides with various lengths which act as a topical antimicrobial defense in sweat on skin. The unprocessed precursor form, cathelicidin antimicrobial peptide, inhibits the growth of Gram-negative E.coli and E.aerogenes with efficiencies comparable to that of the mature peptide LL-37 (in vitro). Functionally, antimicrobial peptide that is an integral component of the innate immune system. Binds to bacterial lipopolysaccharides (LPS). Causes membrane permeabilization by forming transmembrane pores (in vitro). Causes lysis of E.coli. Exhibits antimicrobial activity against Gram-negative bacteria such as P.aeruginosa, S.typhimurium, E.aerogenes, E.coli and P.syringae, Gram-positive bacteria such as L.monocytogenes, S.epidermidis, S.pyogenes and S.aureus, as well as vancomycin-resistant enterococci (in vitro). Exhibits antimicrobial activity against methicillin-resistant S.aureus, P.mirabilis, and C.albicans in low-salt media, but not in media containing 100 mM NaCl (in vitro). Forms chiral supramolecular assemblies with quinolone signal (PQS) molecules of P.aeruginosa, which may lead to interference of bacterial quorum signaling and perturbance of bacterial biofilm formation. May form supramolecular fiber-like assemblies on bacterial membranes. Induces cytokine and chemokine producation as well as TNF/TNFA and CSF2/GMCSF production in normal human keratinocytes. Exhibits hemolytic activity against red blood cells. Exhibits antimicrobial activity against E.coli and B.megaterium (in vitro). This is Cathelicidin antimicrobial peptide from Ateles fusciceps (Brown-headed spider monkey).